A 317-amino-acid polypeptide reads, in one-letter code: Melanocyte-stimulating hormone receptor (317 aa).

Residues 1–37 (MAVQGFQRRLLGSLNSTPTAIPQLGLAANQTGARCLE) lie on the Extracellular side of the membrane. Asn-29 carries N-linked (GlcNAc...) asparagine glycosylation. The helical transmembrane segment at 38–63 (VSIPDGLFLSLGLVSLVENVLVVATI) threads the bilayer. Over 64 to 72 (AKNRNLHSP) the chain is Cytoplasmic. A helical membrane pass occupies residues 73-93 (TYCFICCLALSDLLVSGGNVL). The Extracellular segment spans residues 94 to 118 (ETVVILLLEASALAARAAVVQPLDN). Residues 119–140 (VIDVITCSSMVSSLCFLGAIAM) traverse the membrane as a helical segment. The Cytoplasmic portion of the chain corresponds to 141–163 (DRYVSIFYALRYHSIVTLPRARQ). A helical membrane pass occupies residues 164-183 (AIAAIWVASVLFSTLFIAYY). Residues 184–191 (DHAAVLLC) lie on the Extracellular side of the membrane. A helical membrane pass occupies residues 192 to 211 (LVVFFLAMLVLMAVLYVHML). The Cytoplasmic portion of the chain corresponds to 212-240 (ARACQHAQGIARLHKRQRPLHQGFGLKGA). The chain crosses the membrane as a helical span at residues 241–266 (VTLTILLGIFFLCWGPFFLHLTLIVL). At 267 to 279 (CPQHPTCSCIFKN) the chain is on the extracellular side. The helical transmembrane segment at 280 to 300 (FNLFLTLIICNAIIDPLIYAF) threads the bilayer. The Cytoplasmic segment spans residues 301–317 (RRQELRRTLKEGLTCSW). Cys-315 is lipidated: S-palmitoyl cysteine.

The protein belongs to the G-protein coupled receptor 1 family. As to quaternary structure, interacts with MGRN1, but does not undergo MGRN1-mediated ubiquitination; this interaction competes with GNAS-binding and thus inhibits agonist-induced cAMP production. Interacts with OPN3; the interaction results in a decrease in MC1R-mediated cAMP signaling and ultimately a decrease in melanin production in melanocytes.

The protein resides in the cell membrane. Its function is as follows. Receptor for MSH (alpha, beta and gamma) and ACTH. The activity of this receptor is mediated by G proteins which activate adenylate cyclase. Mediates melanogenesis, the production of eumelanin (black/brown) and phaeomelanin (red/yellow), via regulation of cAMP signaling in melanocytes. The polypeptide is Melanocyte-stimulating hormone receptor (MC1R) (Hylobates lar (Lar gibbon)).